Reading from the N-terminus, the 276-residue chain is Diaminopimelate epimerase (276 aa).

Residues Asn-13, Gln-46, and Asn-66 each coordinate substrate. The Proton donor role is filled by Cys-75. Substrate is bound by residues 76–77, Asn-159, Asn-192, and 210–211; these read GN and ER. Cys-219 (proton acceptor) is an active-site residue. 220 to 221 lines the substrate pocket; that stretch reads GT.

This sequence belongs to the diaminopimelate epimerase family. Homodimer.

It is found in the cytoplasm. The enzyme catalyses (2S,6S)-2,6-diaminopimelate = meso-2,6-diaminopimelate. It functions in the pathway amino-acid biosynthesis; L-lysine biosynthesis via DAP pathway; DL-2,6-diaminopimelate from LL-2,6-diaminopimelate: step 1/1. Functionally, catalyzes the stereoinversion of LL-2,6-diaminopimelate (L,L-DAP) to meso-diaminopimelate (meso-DAP), a precursor of L-lysine and an essential component of the bacterial peptidoglycan. The protein is Diaminopimelate epimerase of Aeromonas salmonicida (strain A449).